The following is a 402-amino-acid chain: Endo-polygalacturonase (402 aa).

The signal sequence occupies residues 1-23; it reads MEYQSGKRVLSLSLGLIGLFSAS. Intrachain disulfides connect C41/C62 and C115/C125. Residue D249 is the Proton donor of the active site. The active site involves H277.

This sequence belongs to the glycosyl hydrolase 28 family. In terms of assembly, monomer.

It is found in the secreted. It catalyses the reaction (1,4-alpha-D-galacturonosyl)n+m + H2O = (1,4-alpha-D-galacturonosyl)n + (1,4-alpha-D-galacturonosyl)m.. Functionally, involved in maceration and soft-rotting of plant tissue. The polypeptide is Endo-polygalacturonase (pehA) (Pectobacterium parmentieri).